Reading from the N-terminus, the 521-residue chain is Phomenoic acid biosynthesis cluster-specific transcriptional regulator (521 aa).

Residues 46–76 constitute a DNA-binding region (zn(2)-C6 fungal-type); that stretch reads HCWQCRRSCVVCDFTQPGCQRCSAAGVSCPG.

The protein localises to the nucleus. In terms of biological role, transcriptional regulator; part of the gene cluster that mediates the biosynthesis of phomenoic acid, a long chain aliphatic carboxylic acid that does not appear to be essential for pathogenicity but may play a role in allowing to outcompete other fungi in the environmental niche via its antifungal properties. Positively regulates the expression of the cluster and subsequent production of phomenoic acid. The polypeptide is Phomenoic acid biosynthesis cluster-specific transcriptional regulator (Leptosphaeria maculans (strain JN3 / isolate v23.1.3 / race Av1-4-5-6-7-8) (Blackleg fungus)).